Consider the following 251-residue polypeptide: Hydroxyacylglutathione hydrolase (251 aa).

The Zn(2+) site is built by H53, H55, D57, H58, H110, D127, and H165.

Belongs to the metallo-beta-lactamase superfamily. Glyoxalase II family. As to quaternary structure, monomer. Requires Zn(2+) as cofactor.

The enzyme catalyses an S-(2-hydroxyacyl)glutathione + H2O = a 2-hydroxy carboxylate + glutathione + H(+). It participates in secondary metabolite metabolism; methylglyoxal degradation; (R)-lactate from methylglyoxal: step 2/2. Thiolesterase that catalyzes the hydrolysis of S-D-lactoyl-glutathione to form glutathione and D-lactic acid. The polypeptide is Hydroxyacylglutathione hydrolase (Yersinia pestis (strain Pestoides F)).